The primary structure comprises 99 residues: Gibberellin-regulated protein 2 (99 aa).

The signal sequence occupies residues 1-26 (MAVFRSTLVLLLIIVCLTTYELHVHA).

It belongs to the GASA family. In terms of processing, six disulfide bonds may be present. As to expression, dry seeds and maturating siliques.

It localises to the secreted. Functionally, gibberellin-regulated protein that may function in hormonal controlled steps of development such as seed germination, flowering and seed maturation. This is Gibberellin-regulated protein 2 (GASA2) from Arabidopsis thaliana (Mouse-ear cress).